A 349-amino-acid chain; its full sequence is Protein-glutamate methylesterase/protein-glutamine glutaminase (349 aa).

In terms of domain architecture, Response regulatory spans 5–122; that stretch reads RVLSVDDSAL…REGMLAYSEM (118 aa). Position 56 is a 4-aspartylphosphate (aspartate 56). Positions 152 to 344 constitute a CheB-type methylesterase domain; the sequence is LLSSEKLIAI…QQMLAKISAG (193 aa). Active-site residues include serine 164, histidine 190, and aspartate 286.

It belongs to the CheB family. Phosphorylated by CheA. Phosphorylation of the N-terminal regulatory domain activates the methylesterase activity.

It is found in the cytoplasm. The enzyme catalyses [protein]-L-glutamate 5-O-methyl ester + H2O = L-glutamyl-[protein] + methanol + H(+). It catalyses the reaction L-glutaminyl-[protein] + H2O = L-glutamyl-[protein] + NH4(+). Its function is as follows. Involved in chemotaxis. Part of a chemotaxis signal transduction system that modulates chemotaxis in response to various stimuli. Catalyzes the demethylation of specific methylglutamate residues introduced into the chemoreceptors (methyl-accepting chemotaxis proteins or MCP) by CheR. Also mediates the irreversible deamidation of specific glutamine residues to glutamic acid. The chain is Protein-glutamate methylesterase/protein-glutamine glutaminase from Salmonella typhi.